A 128-amino-acid chain; its full sequence is Phosphoribosyl-AMP cyclohydrolase (128 aa).

Residue Asp86 coordinates Mg(2+). A Zn(2+)-binding site is contributed by Cys87. 2 residues coordinate Mg(2+): Asp88 and Asp90. The Zn(2+) site is built by Cys103 and Cys110.

It belongs to the PRA-CH family. Homodimer. Mg(2+) is required as a cofactor. It depends on Zn(2+) as a cofactor.

It localises to the cytoplasm. It carries out the reaction 1-(5-phospho-beta-D-ribosyl)-5'-AMP + H2O = 1-(5-phospho-beta-D-ribosyl)-5-[(5-phospho-beta-D-ribosylamino)methylideneamino]imidazole-4-carboxamide. It functions in the pathway amino-acid biosynthesis; L-histidine biosynthesis; L-histidine from 5-phospho-alpha-D-ribose 1-diphosphate: step 3/9. Its function is as follows. Catalyzes the hydrolysis of the adenine ring of phosphoribosyl-AMP. The protein is Phosphoribosyl-AMP cyclohydrolase of Roseobacter denitrificans (strain ATCC 33942 / OCh 114) (Erythrobacter sp. (strain OCh 114)).